An 820-amino-acid chain; its full sequence is Crinkler effector protein 108 (820 aa).

The first 17 residues, 1–17 (MVKLYCAVVGVAGSAFS), serve as a signal peptide directing secretion. Residues 18-55 (VRVDESDTVDDLKDAIKAKKPNDFKDIDADKLELYVAK) form an LQLFLAK domain region. A DWL domain region spans residues 58–111 (GVWLTEADVKSGVADITGLVRLEVVRAKLFSVGLSDEVVSEVDAQEEAAGRGPV). The short motif at 112-117 (NVLVVV) is the HVLVXXP motif element. Residues 118–124 (PMKKRRV) carry the Host nuclear localization signal motif. The segment at 125-820 (DAGVDEERRF…MHYDDDEADL (696 aa)) is C-terminal DC effector domain. Residues Asn268, Asn371, and Asn703 are each glycosylated (N-linked (GlcNAc...) asparagine). The tract at residues 754–791 (NINTASFHELRRLEGVGDATAAKIIAERTIRRFSNLED) is hhH DNA-binding domain.

It belongs to the Crinkler effector family.

The protein resides in the secreted. Its subcellular location is the host nucleus. Secreted effector that suppresses plant basal defense and promotes plant susceptibility via targeting promoters of host HSP gene and thus inhibiting their expression. CRN108 binds directly to heat shock elements (HSEs) 5'-GAAnnTTC-3' and interferes with the association of the HSE with the plant heat shock transcription factors, which initializes HSP gene expression in response to stress. This Phytophthora sojae (Soybean stem and root rot agent) protein is Crinkler effector protein 108.